The chain runs to 359 residues: UPF0284 protein MAE_56900 (359 aa).

Belongs to the UPF0284 family.

In Microcystis aeruginosa (strain NIES-843 / IAM M-2473), this protein is UPF0284 protein MAE_56900.